Reading from the N-terminus, the 266-residue chain is Eukaryotic translation initiation factor 3 subunit J (266 aa).

Disordered regions lie at residues 1 to 142 (MAPS…VSDS) and 215 to 243 (MSNE…VSLV). The span at 26-44 (DEEEEDVLDSWDAAEDSEV) shows a compositional bias: acidic residues. The stretch at 40-99 (EDSEVEREKAAKAAEAKAKAEAEAAAKKKSKAQRIQEHKEERKKREEEDSSSESEEDEAE) forms a coiled coil. Composition is skewed to basic and acidic residues over residues 45-65 (EREK…EAAA) and 73-86 (RIQE…KREE). A compositionally biased stretch (acidic residues) spans 87 to 97 (EDSSSESEEDE). 2 stretches are compositionally biased toward basic and acidic residues: residues 98-118 (AERR…HAED) and 218-230 (EKMR…DKGN).

Belongs to the eIF-3 subunit J family. As to quaternary structure, component of the eukaryotic translation initiation factor 3 (eIF-3) complex.

It is found in the cytoplasm. Functionally, component of the eukaryotic translation initiation factor 3 (eIF-3) complex, which is involved in protein synthesis of a specialized repertoire of mRNAs and, together with other initiation factors, stimulates binding of mRNA and methionyl-tRNAi to the 40S ribosome. The eIF-3 complex specifically targets and initiates translation of a subset of mRNAs involved in cell proliferation. This chain is Eukaryotic translation initiation factor 3 subunit J (hcr1), found in Aspergillus terreus (strain NIH 2624 / FGSC A1156).